The primary structure comprises 115 residues: Valyl--tRNA ligase modifier (115 aa).

In terms of biological role, binds to the host (E.coli) valyl--tRNA ligase and thereby changes several of its physicochemical properties. The polypeptide is Valyl--tRNA ligase modifier (vs) (Enterobacteria phage T4 (Bacteriophage T4)).